The sequence spans 526 residues: Phosphoenolpyruvate carboxykinase (ATP) (526 aa).

3 residues coordinate substrate: R55, Y190, and K196. ATP-binding positions include K196, H215, and 231-239 (GLSGTGKTT). Mn(2+) is bound by residues K196 and H215. Position 252 (D252) interacts with Mn(2+). The ATP site is built by E280, R317, and T442. R317 is a substrate binding site.

It belongs to the phosphoenolpyruvate carboxykinase (ATP) family. The cofactor is Mn(2+).

Its subcellular location is the cytoplasm. The enzyme catalyses oxaloacetate + ATP = phosphoenolpyruvate + ADP + CO2. The protein operates within carbohydrate biosynthesis; gluconeogenesis. In terms of biological role, involved in the gluconeogenesis. Catalyzes the conversion of oxaloacetate (OAA) to phosphoenolpyruvate (PEP) through direct phosphoryl transfer between the nucleoside triphosphate and OAA. The protein is Phosphoenolpyruvate carboxykinase (ATP) of Alkaliphilus oremlandii (strain OhILAs) (Clostridium oremlandii (strain OhILAs)).